Consider the following 499-residue polypeptide: Fumarate hydratase 2 (499 aa).

A disordered region spans residues 19-51 (ADVTLKQEDEQQERRSYSTPFREERDTFGPIQV). A compositionally biased stretch (basic and acidic residues) spans 23 to 45 (LKQEDEQQERRSYSTPFREERDT). Substrate-binding positions include 134-136 (SGT), 164-167 (HPND), 174-176 (SSN), and Thr222. The Proton donor/acceptor role is filled by His223. Residue Ser353 is part of the active site. Residues Ser354 and 359-361 (KVN) contribute to the substrate site.

This sequence belongs to the class-II fumarase/aspartase family. Fumarase subfamily. In terms of assembly, homotetramer.

It localises to the cytoplasm. The protein resides in the cytosol. The enzyme catalyses (S)-malate = fumarate + H2O. Its activity is regulated as follows. Fumarate hydratase activity (fumarate to L-malate) is strongly inhibited by phosphoenolpyruvate, citrate, oxaloacetate, ATP and ADP. Malate dehydratase activity (malate to fumarate) is activated by oxaloacetate, Asn and Gln. Malate dehydratase activity (malate to fumarate) is inhibited by citrate, succinate, ADP and ATP. Cytosolic fumarate hydratase that catalyzes the reversible stereospecific interconversion of fumarate to L-malate. Catalyzes the dehydration of L-malate to fumarate in the cytosol: required for the massive fumarate accumulation during the day in plants grown under high nitrogen. Also required for acclimation of photosynthesis to cold: acts by mediating accumulation of fumarate at low temperature, leading to reduce accumulation of phosphorylated sugars. This Arabidopsis thaliana (Mouse-ear cress) protein is Fumarate hydratase 2.